The primary structure comprises 384 residues: Probable fructokinase-6, chloroplastic (384 aa).

The N-terminal 46 residues, 1–46 (MALQATTTTFCFSGPTFRSTPHSLTSKRPISIKATTSSPSRLSNSR), are a transit peptide targeting the chloroplast. A disordered region spans residues 34-61 (ATTSSPSRLSNSRSNLKGRALSSDGSTQ). Positions 35-48 (TTSSPSRLSNSRSN) are enriched in low complexity.

This sequence belongs to the carbohydrate kinase PfkB family.

It localises to the plastid. Its subcellular location is the chloroplast. It carries out the reaction D-fructose + ATP = D-fructose 6-phosphate + ADP + H(+). It functions in the pathway glycan biosynthesis; starch biosynthesis. In terms of biological role, may play an important role in maintaining the flux of carbon towards starch formation. This is Probable fructokinase-6, chloroplastic from Arabidopsis thaliana (Mouse-ear cress).